We begin with the raw amino-acid sequence, 363 residues long: Serpentine receptor class beta-18 (363 aa).

7 helical membrane-spanning segments follow: residues 52-72 (LAQFSHVVFSFMGLIIVVVYI), 92-112 (MLLFIVAHSIDMIVLHIYHII), 135-155 (FRYTFSFCSMGLAICTYCIYI), 172-192 (LILAAQICQLIVISSLIIIWV), 218-238 (KATIAVFPINFICFFLSIGLF), 276-296 (AALMALFSVASLLMRLVYNFL), and 303-323 (TIATLSYIMSIYCFTVPLVIV).

Belongs to the nematode receptor-like protein srb family.

It is found in the membrane. The chain is Serpentine receptor class beta-18 (srb-18) from Caenorhabditis elegans.